A 561-amino-acid chain; its full sequence is Carboxylesterase 1F (561 aa).

Residues 1–17 form the signal peptide; the sequence is MFLSTLFLVSLATCVIC. A disulfide bond links Cys87 and Cys116. The Acyl-ester intermediate role is filled by Ser221. Cys273 and Cys284 are joined by a disulfide. Active-site charge relay system residues include Glu353 and His466. A Prevents secretion from ER motif is present at residues 558-561; that stretch reads HNEL.

It belongs to the type-B carboxylesterase/lipase family. In terms of tissue distribution, expressed in liver, white and brown adipose tissue, kidney, intestine, adrenal, heart and ovary. Not detected in muscle, lung, testis, brain and spleen.

It localises to the lipid droplet. The protein localises to the cytoplasm. The protein resides in the cytosol. It is found in the endoplasmic reticulum. Its subcellular location is the microsome. It carries out the reaction a carboxylic ester + H2O = an alcohol + a carboxylate + H(+). The enzyme catalyses all-trans-retinyl hexadecanoate + H2O = all-trans-retinol + hexadecanoate + H(+). Its function is as follows. Involved in the detoxification of xenobiotics and in the activation of ester and amide prodrugs. Hydrolyzes retinyl esters. Hydrolyzes p-nitrophenyl butyrate (PNPB), triacylglycerol and monoacylglycerol. Shows higher activity against PNPB, a short-chain fatty acid ester, than against triolein, a long-chain fatty acid ester. Shows no detectable activity against diacylglycerol, cholesterol ester or phospholipids. May play a role in adipocyte lipolysis. The protein is Carboxylesterase 1F of Mus musculus (Mouse).